Reading from the N-terminus, the 386-residue chain is MAAVETRVCETDGCSSEAKLQCPTCIKLGIQGSYFCSQECFKGSWATHKLLHKKAKDEKAKREVSSWTVEGDINTDPWAGYRYTGKLRPHYPLMPTRPVPSYIQRPDYADHPLGMSESEQALKGTSQIKLLSSEDIEGMRLVCRLAREVLDVAAGMIKPGVTTEEIDHAVHLACIARNCYPSPLNYYNFPKSCCTSVNEVICHGIPDRRPLQEGDIVNVDITLYRNGYHGDLNETFFVGEVDDGARKLVQTTYECLMQAIDAVKPGVRYRELGNIIQKHAQANGFSVVRSYCGHGIHKLFHTAPNVPHYAKNKAVGVMKSGHVFTIEPMICEGGWQDETWPDGWTAVTRDGKRSAQFEHTLLVTDTGCEILTRRLDSARPHFMSQF.

At alanine 2 the chain carries N-acetylalanine. The C6H2-type zinc-finger motif lies at 6-59 (TRVCETDGCSSEAKLQCPTCIKLGIQGSYFCSQECFKGSWATHKLLHKKAKDEK). Residues cysteine 9, cysteine 14, cysteine 22, cysteine 25, cysteine 36, cysteine 40, histidine 48, and histidine 52 each contribute to the Zn(2+) site. Histidine 203 is an a protein binding site. Zn(2+)-binding residues include aspartate 220, aspartate 231, and histidine 294. Position 301 (histidine 301) interacts with a protein. Glutamate 327 and glutamate 358 together coordinate Zn(2+).

It belongs to the peptidase M24A family. Methionine aminopeptidase type 1 subfamily. As to quaternary structure, associates with the 60S ribosomal subunit of the 80S translational complex. Requires Zn(2+) as cofactor. The cofactor is Co(2+). Mn(2+) serves as cofactor. It depends on Fe(2+) as a cofactor.

It is found in the cytoplasm. The enzyme catalyses Release of N-terminal amino acids, preferentially methionine, from peptides and arylamides.. Its function is as follows. Cotranslationally removes the N-terminal methionine from nascent proteins. The N-terminal methionine is often cleaved when the second residue in the primary sequence is small and uncharged (Met-Ala-, Cys, Gly, Pro, Ser, Thr, or Val). Required for normal progression through the cell cycle. This Homo sapiens (Human) protein is Methionine aminopeptidase 1 (METAP1).